The primary structure comprises 125 residues: Ribonuclease P protein component (125 aa).

It belongs to the RnpA family. In terms of assembly, consists of a catalytic RNA component (M1 or rnpB) and a protein subunit.

It catalyses the reaction Endonucleolytic cleavage of RNA, removing 5'-extranucleotides from tRNA precursor.. RNaseP catalyzes the removal of the 5'-leader sequence from pre-tRNA to produce the mature 5'-terminus. It can also cleave other RNA substrates such as 4.5S RNA. The protein component plays an auxiliary but essential role in vivo by binding to the 5'-leader sequence and broadening the substrate specificity of the ribozyme. This is Ribonuclease P protein component from Ruegeria pomeroyi (strain ATCC 700808 / DSM 15171 / DSS-3) (Silicibacter pomeroyi).